A 256-amino-acid chain; its full sequence is MVALRLIPCLDVSNGRVVKGVNFVGLRDAGDPVELGCRYSKAGADELVFLDITATYEKRSTLVDMVRRTSESVTIPFTVGGGISSLNGINELLRAGADKVSLNSSAVKDPSLISKGANRFGSQCIVVAIDAKKNKNIPNKWDVYVSGGRNNTGLDAIEWAEKVFEMGAGEILLTSMDGDGTQNGYDIELTKCIADKVPIPVIASGGAGCLRHIKEAFTLGKSSAALLASLLHDGQLTIREIKEYLIKENLPIRPIE.

Residues Asp11 and Asp130 contribute to the active site.

It belongs to the HisA/HisF family. Heterodimer of HisH and HisF.

The protein resides in the cytoplasm. It catalyses the reaction 5-[(5-phospho-1-deoxy-D-ribulos-1-ylimino)methylamino]-1-(5-phospho-beta-D-ribosyl)imidazole-4-carboxamide + L-glutamine = D-erythro-1-(imidazol-4-yl)glycerol 3-phosphate + 5-amino-1-(5-phospho-beta-D-ribosyl)imidazole-4-carboxamide + L-glutamate + H(+). The protein operates within amino-acid biosynthesis; L-histidine biosynthesis; L-histidine from 5-phospho-alpha-D-ribose 1-diphosphate: step 5/9. Functionally, IGPS catalyzes the conversion of PRFAR and glutamine to IGP, AICAR and glutamate. The HisF subunit catalyzes the cyclization activity that produces IGP and AICAR from PRFAR using the ammonia provided by the HisH subunit. The chain is Imidazole glycerol phosphate synthase subunit HisF from Prochlorococcus marinus (strain NATL2A).